Here is a 331-residue protein sequence, read N- to C-terminus: GTPase Obg (331 aa).

In terms of domain architecture, Obg spans 1–159; that stretch reads MHFIDEVKIY…MWIHLRLKLL (159 aa). Positions 160–327 constitute an OBG-type G domain; sequence SDVGLIGLPN…IVKLALEIIK (168 aa). Residues 166-173, 191-195, 212-215, 279-282, and 308-310 each bind GTP; these read GLPNAGKS, FTTLV, DIPG, NKCD, and STY. Mg(2+) is bound by residues S173 and T193.

The protein belongs to the TRAFAC class OBG-HflX-like GTPase superfamily. OBG GTPase family. In terms of assembly, monomer. The cofactor is Mg(2+).

The protein localises to the cytoplasm. Its function is as follows. An essential GTPase which binds GTP, GDP and possibly (p)ppGpp with moderate affinity, with high nucleotide exchange rates and a fairly low GTP hydrolysis rate. Plays a role in control of the cell cycle, stress response, ribosome biogenesis and in those bacteria that undergo differentiation, in morphogenesis control. In Rickettsia prowazekii (strain Madrid E), this protein is GTPase Obg.